The sequence spans 492 residues: N-succinylglutamate 5-semialdehyde dehydrogenase (492 aa).

Gly220 to Gly225 provides a ligand contact to NAD(+). Active-site residues include Glu243 and Cys277.

The protein belongs to the aldehyde dehydrogenase family. AstD subfamily.

The catalysed reaction is N-succinyl-L-glutamate 5-semialdehyde + NAD(+) + H2O = N-succinyl-L-glutamate + NADH + 2 H(+). Its pathway is amino-acid degradation; L-arginine degradation via AST pathway; L-glutamate and succinate from L-arginine: step 4/5. Functionally, catalyzes the NAD-dependent reduction of succinylglutamate semialdehyde into succinylglutamate. This chain is N-succinylglutamate 5-semialdehyde dehydrogenase, found in Escherichia coli (strain SE11).